The following is a 264-amino-acid chain: Taurine import ATP-binding protein TauB (264 aa).

In terms of domain architecture, ABC transporter spans 4 to 233 (LQLERISAQY…RYAAGESARA (230 aa)). 38-45 (GPSGSGKT) contributes to the ATP binding site.

It belongs to the ABC transporter superfamily. Taurine importer (TC 3.A.1.17.1) family. The complex is composed of two ATP-binding proteins (TauB), two transmembrane proteins (TauC) and a solute-binding protein (TauA).

It is found in the cell inner membrane. The enzyme catalyses taurine(out) + ATP + H2O = taurine(in) + ADP + phosphate + H(+). Part of the ABC transporter complex TauABC involved in taurine import. Responsible for energy coupling to the transport system. The polypeptide is Taurine import ATP-binding protein TauB (Pseudomonas fluorescens (strain Pf0-1)).